The sequence spans 305 residues: MAKPDLSVEISGIKLRNPVMTASGTFGYGKEFSDYLDLEKIGAIITKGLSLRPKAGNPTPRIVETPGGMLNAIGLQNVGIDAFIGEKLPFLRTVDTPVIVNLYGNTLEEYGELAEKLDRLPEVAGLEVNISCPNVKQGGIVFGTDPNAAAEVVGLVRRSTSKPLIIKLSPNVTDVVRMADACVNAGADALSLINTLTGMAIDLQKRRPILANITGGLSGPAIKPVALRMVWQVSQAMAVPIIGIGGIMSATDALEFMLAGATAVQVGTANFLDPSAAQTIAAGIEDYLAKNGISDVKELIGALKI.

Residues Ser23 and 47–48 contribute to the FMN site; that span reads KG. Substrate contacts are provided by residues Lys47 and 71–75; that span reads NAIGL. Asn101 and Asn129 together coordinate FMN. Substrate is bound at residue Asn129. Cys132 functions as the Nucleophile in the catalytic mechanism. FMN contacts are provided by Lys167 and Ile193. Substrate is bound at residue 194-195; the sequence is NT. FMN is bound by residues Gly219, 245–246, and 267–268; these read GG and GT.

The protein belongs to the dihydroorotate dehydrogenase family. Type 1 subfamily. As to quaternary structure, heterotetramer of 2 PyrK and 2 PyrD type B subunits. Requires FMN as cofactor.

The protein localises to the cytoplasm. The catalysed reaction is (S)-dihydroorotate + NAD(+) = orotate + NADH + H(+). It participates in pyrimidine metabolism; UMP biosynthesis via de novo pathway; orotate from (S)-dihydroorotate (NAD(+) route): step 1/1. Catalyzes the conversion of dihydroorotate to orotate with NAD(+) as electron acceptor. The polypeptide is Dihydroorotate dehydrogenase B (NAD(+)), catalytic subunit (pyrD) (Geotalea daltonii (strain DSM 22248 / JCM 15807 / FRC-32) (Geobacter daltonii)).